The sequence spans 166 residues: Small ribosomal subunit protein cS23z (166 aa).

This sequence belongs to the chloroplast-specific ribosomal protein cS23 family. In terms of assembly, part of the 30S ribosomal subunit.

It is found in the plastid. It localises to the chloroplast. Functionally, component of the chloroplast ribosome (chloro-ribosome), a dedicated translation machinery responsible for the synthesis of chloroplast genome-encoded proteins, including proteins of the transcription and translation machinery and components of the photosynthetic apparatus. The polypeptide is Small ribosomal subunit protein cS23z (Arabidopsis thaliana (Mouse-ear cress)).